The sequence spans 310 residues: Homoserine O-acetyltransferase (310 aa).

Cys142 functions as the Acyl-thioester intermediate in the catalytic mechanism. Lys163 and Ser192 together coordinate substrate. The Proton acceptor role is filled by His235. Glu237 is a catalytic residue. Residue Arg249 participates in substrate binding.

The protein belongs to the MetA family.

The protein localises to the cytoplasm. The catalysed reaction is L-homoserine + acetyl-CoA = O-acetyl-L-homoserine + CoA. The protein operates within amino-acid biosynthesis; L-methionine biosynthesis via de novo pathway; O-acetyl-L-homoserine from L-homoserine: step 1/1. Transfers an acetyl group from acetyl-CoA to L-homoserine, forming acetyl-L-homoserine. In Lachnospira eligens (strain ATCC 27750 / DSM 3376 / VPI C15-48 / C15-B4) (Eubacterium eligens), this protein is Homoserine O-acetyltransferase.